Here is an 88-residue protein sequence, read N- to C-terminus: KTx type I (88 aa).

An N-terminal signal peptide occupies residues 1–19 (MKTTLVVVVLACIVALTSA). The region spanning 54–88 (CKDVLSEFSCGVLKKDGQCNKADIQAKCKLTCDKC) is the ShKT domain. 3 disulfide bridges follow: C54/C88, C63/C81, and C72/C85.

This sequence belongs to the sea anemone type 1 potassium channel toxin family. As to expression, expressed both outside and in acontia, a specialised envenomation structure laden with batteries of venom-containing nematocysts found only in the superfamily Metridioidea.

The protein resides in the secreted. It localises to the nematocyst. In terms of biological role, inhibits voltage-gated potassium channels (Kv1/KCNA). The sequence is that of KTx type I from Calliactis polypus (Hermit crab anemone).